A 337-amino-acid chain; its full sequence is Cobalt-precorrin-5B C(1)-methyltransferase (337 aa).

It belongs to the CbiD family.

It catalyses the reaction Co-precorrin-5B + S-adenosyl-L-methionine = Co-precorrin-6A + S-adenosyl-L-homocysteine. It functions in the pathway cofactor biosynthesis; adenosylcobalamin biosynthesis; cob(II)yrinate a,c-diamide from sirohydrochlorin (anaerobic route): step 6/10. In terms of biological role, catalyzes the methylation of C-1 in cobalt-precorrin-5B to form cobalt-precorrin-6A. This is Cobalt-precorrin-5B C(1)-methyltransferase from Methanoculleus marisnigri (strain ATCC 35101 / DSM 1498 / JR1).